The following is a 346-amino-acid chain: MARPQRTPARSPDSIVEVKSKFDAEFRRFALPRTSVRGFQEFSRLLCVVHQIPGLDVLLGYTDAHGDLLPLTNDDSLHRALASGPPPLRLLVQKRAEGDSSGLAFASNSLQRRKKGLLLRPVAPLRTRPPLLISLPQDFRQVSSVIDVDLLPETHRRVRLHKHGSDRPLGFYIRDGMSVRVAPQGLERVPGIFISRLVRGGLAESTGLLAVSDEILEVNGIEVAGKTLDQVTDMMVANSHNLIVTVKPANQRNNVVRGASGRLTGPSSVGPGPTDPDSDDDNSDPVIENRHPPCSNGLSQGPLCWDLQPGCLHPSAGSSLPSLDSREQANSGWGNGMRGDVSGFSL.

An interaction with PRKCI and PRKCZ region spans residues 1 to 116; that stretch reads MARPQRTPAR…SNSLQRRKKG (116 aa). Positions 15 to 95 constitute a PB1 domain; that stretch reads IVEVKSKFDA…PPLRLLVQKR (81 aa). An interaction with PARD3 and CDC42 region spans residues 126 to 253; that stretch reads RTRPPLLISL…VTVKPANQRN (128 aa). Residues 133-150 form the Pseudo-CRIB domain; it reads ISLPQDFRQVSSVIDVDL. The region spanning 157–250 is the PDZ domain; sequence RVRLHKHGSD…NLIVTVKPAN (94 aa). Disordered stretches follow at residues 257 to 294 and 317 to 346; these read RGASGRLTGPSSVGPGPTDPDSDDDNSDPVIENRHPPC and GSSLPSLDSREQANSGWGNGMRGDVSGFSL. Ser-278 is subject to Phosphoserine. The span at 317–332 shows a compositional bias: polar residues; the sequence is GSSLPSLDSREQANSG. The residue at position 345 (Ser-345) is a Phosphoserine.

Belongs to the PAR6 family. In terms of assembly, interacts with PALS1 and CRB3. Interacts with PARD3. Interacts with GTP-bound forms of CDC42, RHOQ/TC10 and RAC1. Interacts with the N-terminal part of PRKCI and PRKCZ. Part of a complex with PARD3, CDC42 or RAC1 and PRKCI or PRKCZ. Part of a complex with LLGL1 and PRKCI. Interacts with MAP2K5. Interacts with TGFBR1; involved in TGF-beta induced epithelial to mesenchymal transition. Interacts with ECT2 ('Thr-359' phosphorylated form) and PRKCI. Interacts with DCTN1 and PCM1. Post-translationally, phosphorylated by the TGF-beta receptor. Ubiquitinated by the SCF(FBXO31) complex, leading to its proteasomal degradation.

The protein resides in the cytoplasm. The protein localises to the cell membrane. It is found in the cell junction. Its subcellular location is the tight junction. It localises to the cytoskeleton. The protein resides in the microtubule organizing center. The protein localises to the centrosome. It is found in the centriolar satellite. Adapter protein involved in asymmetrical cell division and cell polarization processes. Probably involved in the formation of epithelial tight junctions. Association with PARD3 may prevent the interaction of PARD3 with F11R/JAM1, thereby preventing tight junction assembly. The PARD6-PARD3 complex links GTP-bound Rho small GTPases to atypical protein kinase C proteins. Regulates centrosome organization and function. Essential for the centrosomal recruitment of key proteins that control centrosomal microtubule organization. The polypeptide is Partitioning defective 6 homolog alpha (Pard6a) (Rattus norvegicus (Rat)).